A 196-amino-acid polypeptide reads, in one-letter code: Pyridoxal 5'-phosphate synthase subunit PdxT (196 aa).

Residue Gly-47–Ser-49 participates in L-glutamine binding. Cys-79 functions as the Nucleophile in the catalytic mechanism. Residues Arg-106 and Ile-134–Arg-135 contribute to the L-glutamine site. Active-site charge relay system residues include His-170 and Glu-172.

It belongs to the glutaminase PdxT/SNO family. In terms of assembly, in the presence of PdxS, forms a dodecamer of heterodimers. Only shows activity in the heterodimer.

It carries out the reaction aldehydo-D-ribose 5-phosphate + D-glyceraldehyde 3-phosphate + L-glutamine = pyridoxal 5'-phosphate + L-glutamate + phosphate + 3 H2O + H(+). The enzyme catalyses L-glutamine + H2O = L-glutamate + NH4(+). Its pathway is cofactor biosynthesis; pyridoxal 5'-phosphate biosynthesis. In terms of biological role, catalyzes the hydrolysis of glutamine to glutamate and ammonia as part of the biosynthesis of pyridoxal 5'-phosphate. The resulting ammonia molecule is channeled to the active site of PdxS. The protein is Pyridoxal 5'-phosphate synthase subunit PdxT of Bacillus subtilis (strain 168).